Here is a 1181-residue protein sequence, read N- to C-terminus: Lysine-specific demethylase hairless (1181 aa).

Residues 311–323 (TPRCPSPGPPTPP) are compositionally biased toward pro residues. Disordered regions lie at residues 311-378 (TPRC…HTKL), 413-472 (AGSP…DGRI), and 509-543 (SHSQKSHKLPLEEKPLEEDSCATSEEGGGSSPEAS). The span at 347–357 (SPEGSSSGPGE) shows a compositional bias: low complexity. Residues 447-461 (TPETSTGSKAEAQQQ) are compositionally biased toward polar residues. Basic and acidic residues predominate over residues 462–472 (EEQRGPRDGRI). Residues 560 to 564 (LCRLL) carry the LXXLL motif 1 motif. The C6-type zinc-finger motif lies at 594-619 (CSRCHHGLFNTHWRCSHCSHRLCVAC). Residues 696–745 (GDGGQQKEPTEKTPPAPQLSCNGDSNRTKDIKEETPDSTESPAEDRAGRS) form a disordered region. Positions 721-730 (NRTKDIKEET) are enriched in basic and acidic residues. The LXXLL motif 2 signature appears at 752–756 (LCELL). The region spanning 938-1149 (DESRVENLAS…LSAQLCHQGA (212 aa)) is the JmjC domain. Fe cation is bound by residues cysteine 999, glutamate 1001, and histidine 1117.

Requires Fe(2+) as cofactor.

The protein resides in the nucleus. It catalyses the reaction N(6),N(6)-dimethyl-L-lysyl(9)-[histone H3] + 2 2-oxoglutarate + 2 O2 = L-lysyl(9)-[histone H3] + 2 formaldehyde + 2 succinate + 2 CO2. Its function is as follows. Histone demethylase that specifically demethylates both mono- and dimethylated 'Lys-9' of histone H3. May act as a transcription regulator controlling hair biology (via targeting of collagens), neural activity, and cell cycle. This chain is Lysine-specific demethylase hairless (Hr), found in Rattus norvegicus (Rat).